A 456-amino-acid polypeptide reads, in one-letter code: Chromosomal replication initiator protein DnaA (456 aa).

The domain I, interacts with DnaA modulators stretch occupies residues Met1 to His83. Residues His83 to Ser119 are domain II. The segment at Ala92 to Asn122 is disordered. Residues Trp105–His117 show a composition bias toward basic and acidic residues. The segment at Asn120–Ala336 is domain III, AAA+ region. Residues Gly164, Gly166, Lys167, and Thr168 each coordinate ATP. The segment at Asn337–Ser456 is domain IV, binds dsDNA.

This sequence belongs to the DnaA family. Oligomerizes as a right-handed, spiral filament on DNA at oriC.

The protein resides in the cytoplasm. In terms of biological role, plays an essential role in the initiation and regulation of chromosomal replication. ATP-DnaA binds to the origin of replication (oriC) to initiate formation of the DNA replication initiation complex once per cell cycle. Binds the DnaA box (a 9 base pair repeat at the origin) and separates the double-stranded (ds)DNA. Forms a right-handed helical filament on oriC DNA; dsDNA binds to the exterior of the filament while single-stranded (ss)DNA is stabiized in the filament's interior. The ATP-DnaA-oriC complex binds and stabilizes one strand of the AT-rich DNA unwinding element (DUE), permitting loading of DNA polymerase. After initiation quickly degrades to an ADP-DnaA complex that is not apt for DNA replication. Binds acidic phospholipids. This chain is Chromosomal replication initiator protein DnaA, found in Aeromonas hydrophila subsp. hydrophila (strain ATCC 7966 / DSM 30187 / BCRC 13018 / CCUG 14551 / JCM 1027 / KCTC 2358 / NCIMB 9240 / NCTC 8049).